Reading from the N-terminus, the 284-residue chain is 4-diphosphocytidyl-2-C-methyl-D-erythritol kinase (284 aa).

Lys-10 is a catalytic residue. Residue 92 to 102 (PYGAGLGSGSS) participates in ATP binding. Residue Asp-134 is part of the active site.

This sequence belongs to the GHMP kinase family. IspE subfamily.

The enzyme catalyses 4-CDP-2-C-methyl-D-erythritol + ATP = 4-CDP-2-C-methyl-D-erythritol 2-phosphate + ADP + H(+). It participates in isoprenoid biosynthesis; isopentenyl diphosphate biosynthesis via DXP pathway; isopentenyl diphosphate from 1-deoxy-D-xylulose 5-phosphate: step 3/6. Its function is as follows. Catalyzes the phosphorylation of the position 2 hydroxy group of 4-diphosphocytidyl-2C-methyl-D-erythritol. This is 4-diphosphocytidyl-2-C-methyl-D-erythritol kinase from Salinibacter ruber (strain DSM 13855 / M31).